The sequence spans 260 residues: MAYKPQFYPGQTKIAQNRRDHMNPDVQLEKLRDIPDDDVVKIMGHRQPGEDYKTVHPPLEEMDLPEDYVRDLVEPLNGAKEGHRIRYIQFTDSMYFAPAQPYDRARTYMWRFRGVDTGTLSGRQVIEMRESDLEALSKNFLIDTAFFDPARIGIRGATVHGHSLRLDENGLMFDALQRYVYDEKTGHVLYVKDQVGRPLDEPVDVGEPLPEEKLKEITTIYRIDGVPMREDEELLTVVKRIHRARTLGGFLPVEDVFEKL.

Arginine 123 provides a ligand contact to coenzyme M.

It belongs to the methyl-coenzyme M reductase gamma subunit family. As to quaternary structure, MCR is a hexamer of two alpha, two beta, and two gamma chains, forming a dimer of heterotrimers. The cofactor is coenzyme F430.

The protein resides in the cytoplasm. It carries out the reaction coenzyme B + methyl-coenzyme M = methane + coenzyme M-coenzyme B heterodisulfide. It participates in one-carbon metabolism; methyl-coenzyme M reduction; methane from methyl-coenzyme M: step 1/1. Its function is as follows. Component of the methyl-coenzyme M reductase (MCR) I that catalyzes the reductive cleavage of methyl-coenzyme M (CoM-S-CH3 or 2-(methylthio)ethanesulfonate) using coenzyme B (CoB or 7-mercaptoheptanoylthreonine phosphate) as reductant which results in the production of methane and the mixed heterodisulfide of CoB and CoM (CoM-S-S-CoB). This is the final step in methanogenesis. This chain is Methyl-coenzyme M reductase I subunit gamma (mcrG), found in Methanocaldococcus jannaschii (strain ATCC 43067 / DSM 2661 / JAL-1 / JCM 10045 / NBRC 100440) (Methanococcus jannaschii).